A 475-amino-acid polypeptide reads, in one-letter code: AP-1 complex subunit mu-1-I (475 aa).

In terms of domain architecture, MHD spans 175–473 (KNEAFLDIVE…TQSGDDYTIR (299 aa)). Positions 240 to 262 (ASATTSDNNTETDKKPSITSSSA) are disordered.

It belongs to the adaptor complexes medium subunit family. Adaptor protein complex 1 (AP-1) is a heterotetramer composed of two large adaptins (gamma-type subunit APL4 and beta-type subunit APL2), a medium adaptin (mu-type subunit APM1) and a small adaptin (sigma-type subunit APS1). AP-1 interacts with clathrin.

It localises to the cytoplasmic vesicle. The protein resides in the clathrin-coated vesicle membrane. The protein localises to the membrane. It is found in the clathrin-coated pit. Its function is as follows. Component of the adaptor complexes which link clathrin to receptors in coated vesicles. Clathrin-associated protein complexes are believed to interact with the cytoplasmic tails of membrane proteins, leading to their selection and concentration. The AP-1 complex interacts directly with clathrin. AP57 is probably a subunit of the Golgi membrane adaptor. The sequence is that of AP-1 complex subunit mu-1-I (APM1) from Saccharomyces cerevisiae (strain ATCC 204508 / S288c) (Baker's yeast).